The chain runs to 114 residues: Iron-sulfur cluster insertion protein ErpA (114 aa).

Positions 42, 106, and 108 each coordinate iron-sulfur cluster.

Belongs to the HesB/IscA family. As to quaternary structure, homodimer. Iron-sulfur cluster is required as a cofactor.

Its function is as follows. Required for insertion of 4Fe-4S clusters for at least IspG. This Erwinia tasmaniensis (strain DSM 17950 / CFBP 7177 / CIP 109463 / NCPPB 4357 / Et1/99) protein is Iron-sulfur cluster insertion protein ErpA.